The sequence spans 431 residues: Dual-specificity RNA methyltransferase RlmN (431 aa).

The segment at 1–26 is disordered; the sequence is MATASLDTARPERRAGSDPFIEKTPE. The span at 9–26 shows a compositional bias: basic and acidic residues; it reads ARPERRAGSDPFIEKTPE. Catalysis depends on Glu138, which acts as the Proton acceptor. In terms of domain architecture, Radical SAM core spans 144–394; the sequence is ANDRGTLCVS…VRTPRGRDIL (251 aa). A disulfide bond links Cys151 and Cys397. Cys158, Cys162, and Cys165 together coordinate [4Fe-4S] cluster. S-adenosyl-L-methionine contacts are provided by residues 223 to 224, Ser255, 277 to 279, and Asn354; these read GE and SLH. Cys397 acts as the S-methylcysteine intermediate in catalysis.

It belongs to the radical SAM superfamily. RlmN family. It depends on [4Fe-4S] cluster as a cofactor.

It is found in the cytoplasm. It carries out the reaction adenosine(2503) in 23S rRNA + 2 reduced [2Fe-2S]-[ferredoxin] + 2 S-adenosyl-L-methionine = 2-methyladenosine(2503) in 23S rRNA + 5'-deoxyadenosine + L-methionine + 2 oxidized [2Fe-2S]-[ferredoxin] + S-adenosyl-L-homocysteine. It catalyses the reaction adenosine(37) in tRNA + 2 reduced [2Fe-2S]-[ferredoxin] + 2 S-adenosyl-L-methionine = 2-methyladenosine(37) in tRNA + 5'-deoxyadenosine + L-methionine + 2 oxidized [2Fe-2S]-[ferredoxin] + S-adenosyl-L-homocysteine. Its function is as follows. Specifically methylates position 2 of adenine 2503 in 23S rRNA and position 2 of adenine 37 in tRNAs. m2A2503 modification seems to play a crucial role in the proofreading step occurring at the peptidyl transferase center and thus would serve to optimize ribosomal fidelity. This is Dual-specificity RNA methyltransferase RlmN from Methylobacterium sp. (strain 4-46).